The sequence spans 476 residues: Scopoletin glucosyltransferase (476 aa).

Residue His16 is the Proton acceptor of the active site. His16 lines the an anthocyanidin pocket. Residue Asp119 is the Charge relay of the active site. Ala343, Gln345, His360, Trp363, Asn364, Ser365, and Glu368 together coordinate UDP-alpha-D-glucose. Ala383 lines the an anthocyanidin pocket. UDP-alpha-D-glucose is bound by residues Glu384 and Gln385.

It belongs to the UDP-glycosyltransferase family.

It carries out the reaction scopoletin + UDP-alpha-D-glucose = scopolin + UDP + H(+). Functionally, glucosyltransferase acting preferentially on aromatic substrates of the phenylpropanoid types. The best substrates are scopoletin and esculetin. Required for full resistance to virus. The protein is Scopoletin glucosyltransferase (TOGT1) of Nicotiana tabacum (Common tobacco).